The following is a 188-amino-acid chain: uncharacterized protein (188 aa).

An N-terminal signal peptide occupies residues 1–23 (MVRPKLAFYILPLLLAFLGSALG). N-linked (GlcNAc...) asparagine glycosylation occurs at asparagine 74.

This is an uncharacterized protein from Mus musculus (Mouse).